A 436-amino-acid chain; its full sequence is Glutamyl-tRNA reductase 2 (436 aa).

Substrate contacts are provided by residues 49 to 52 (TCNR), serine 106, 111 to 113 (EPQ), and glutamine 117. Cysteine 50 (nucleophile) is an active-site residue. Residue 186 to 191 (GAGKMC) participates in NADP(+) binding.

It belongs to the glutamyl-tRNA reductase family. Homodimer.

The enzyme catalyses (S)-4-amino-5-oxopentanoate + tRNA(Glu) + NADP(+) = L-glutamyl-tRNA(Glu) + NADPH + H(+). The protein operates within porphyrin-containing compound metabolism; protoporphyrin-IX biosynthesis; 5-aminolevulinate from L-glutamyl-tRNA(Glu): step 1/2. In terms of biological role, catalyzes the NADPH-dependent reduction of glutamyl-tRNA(Glu) to glutamate 1-semialdehyde (GSA). The protein is Glutamyl-tRNA reductase 2 of Koribacter versatilis (strain Ellin345).